A 159-amino-acid chain; its full sequence is Ribosomal RNA large subunit methyltransferase H (159 aa).

Residues Leu-76, Gly-108, and Phe-127–Phe-132 each bind S-adenosyl-L-methionine.

Belongs to the RNA methyltransferase RlmH family. Homodimer.

The protein resides in the cytoplasm. The catalysed reaction is pseudouridine(1915) in 23S rRNA + S-adenosyl-L-methionine = N(3)-methylpseudouridine(1915) in 23S rRNA + S-adenosyl-L-homocysteine + H(+). Specifically methylates the pseudouridine at position 1915 (m3Psi1915) in 23S rRNA. The sequence is that of Ribosomal RNA large subunit methyltransferase H from Lachnoclostridium phytofermentans (strain ATCC 700394 / DSM 18823 / ISDg) (Clostridium phytofermentans).